The sequence spans 56 residues: Large ribosomal subunit protein eL37 (56 aa).

Positions 19, 22, 34, and 37 each coordinate Zn(2+). The C4-type zinc finger occupies 19-37; it reads CRRCGSVSFNVHTKQCTSC.

This sequence belongs to the eukaryotic ribosomal protein eL37 family. Requires Zn(2+) as cofactor.

In terms of biological role, binds to the 23S rRNA. This Methanosarcina acetivorans (strain ATCC 35395 / DSM 2834 / JCM 12185 / C2A) protein is Large ribosomal subunit protein eL37 (rpl37e).